The sequence spans 307 residues: Heme A synthase (307 aa).

At 1 to 6 (MKFALR) the chain is on the cytoplasmic side. A helical transmembrane segment spans residues 7–27 (LLSVITTFVMLIVLIGGALVT). The Extracellular segment spans residues 28 to 65 (KTGSGLGCGRQWPLCHGRFFPEMNPASIIEWSHRMSTG). An intrachain disulfide couples Cys-35 to Cys-42. The active site involves Glu-57. His-60 contacts heme o. A helical membrane pass occupies residues 66–86 (VSTILVLALAVLCWKKISPVF). Residues 87–92 (RETKFL) lie on the Cytoplasmic side of the membrane. Residues 93-113 (VIMSIIFLLLQALLGALAVVF) form a helical membrane-spanning segment. At 114 to 121 (GSNALVMA) the chain is on the extracellular side. A helical membrane pass occupies residues 122-142 (LHFGISLISFASVLLLALLVF). Residue His-123 participates in heme o binding. The Cytoplasmic segment spans residues 143–161 (EATRSETKLVKPLHIGKKM). Residues 162-182 (QFHIYGLITYTYIVVYTGAYV) traverse the membrane as a helical segment. Topologically, residues 183–216 (RHTKSSLACSVFPFCSKDGALPAYFNQWVQMSHR) are extracellular. Residues Cys-191 and Cys-197 are joined by a disulfide bond. Heme b is bound at residue His-215. Residues 217–237 (AAALLLFVWIFVAMFHAMKHY) traverse the membrane as a helical segment. Residues 238–242 (KEQKQ) lie on the Cytoplasmic side of the membrane. A helical membrane pass occupies residues 243–263 (LYYGWIISAILITLQAISGVM). The Extracellular portion of the chain corresponds to 264 to 274 (SVYSQLALGYA). Residues 275 to 295 (LAHSFFISCLFGVLCYFCLLI) traverse the membrane as a helical segment. Residue His-277 coordinates heme b. The Cytoplasmic segment spans residues 296 to 307 (ARFKYESKEPFK).

This sequence belongs to the COX15/CtaA family. Type 1 subfamily. In terms of assembly, interacts with CtaB. It depends on heme b as a cofactor.

Its subcellular location is the cell membrane. The enzyme catalyses Fe(II)-heme o + 2 A + H2O = Fe(II)-heme a + 2 AH2. The protein operates within porphyrin-containing compound metabolism; heme A biosynthesis; heme A from heme O: step 1/1. Its function is as follows. Catalyzes the conversion of heme O to heme A by two successive hydroxylations of the methyl group at C8. The first hydroxylation forms heme I, the second hydroxylation results in an unstable dihydroxymethyl group, which spontaneously dehydrates, resulting in the formyl group of heme A. This Bacillus pumilus (strain SAFR-032) protein is Heme A synthase.